Consider the following 273-residue polypeptide: Non-homologous end joining protein Ku (273 aa).

The Ku domain maps to 13–190 (KLSLVTCPVA…FTGIEKKSDA (178 aa)). The tract at residues 227 to 251 (KKKAKKPSKAKASKSTKGDDEEKSN) is disordered. Positions 228–240 (KKAKKPSKAKASK) are enriched in basic residues.

It belongs to the prokaryotic Ku family. As to quaternary structure, homodimer. Interacts with LigD.

Functionally, with LigD forms a non-homologous end joining (NHEJ) DNA repair enzyme, which repairs dsDNA breaks with reduced fidelity. Binds linear dsDNA with 5'- and 3'- overhangs but not closed circular dsDNA nor ssDNA. Recruits and stimulates the ligase activity of LigD. The sequence is that of Non-homologous end joining protein Ku from Allorhizobium ampelinum (strain ATCC BAA-846 / DSM 112012 / S4) (Agrobacterium vitis (strain S4)).